Here is a 190-residue protein sequence, read N- to C-terminus: Vacuolar protein sorting-associated protein 29 (190 aa).

The protein belongs to the VPS29 family. In terms of assembly, component of the retromer complex which consists of VPS29 (MAG1), VPS26 (VPS26A or VPS26B), VPS35 (VPS35A or VPS35B or VPS35C), VPS5/17 (SNX1 or SNX2A or SNX2B). Component of a retromer subcomplex consisting of VPS29 (MAG1), VPS26 (VPS26A or VPS26B), VPS35 (VPS35A or VPS35B or VPS35C).

It is found in the cytoplasm. It localises to the endosome membrane. The protein localises to the prevacuolar compartment membrane. The protein resides in the golgi apparatus. Its subcellular location is the trans-Golgi network membrane. It is found in the late endosome membrane. Its function is as follows. Plays a role in vesicular protein sorting. Component of the membrane-associated retromer complex which is essential in endosome-to-Golgi retrograde transport. Required for the auxin-carrier protein PIN2 sorting to the lytic vacuolar pathway and the PIN1 recycling to the plasma membrane, thus influencing auxin transport orientation. Also involved in the efficient sorting of seed storage proteins globulin 12S and albumin 2S. The VPS29-VPS26-VPS35 subcomplex may be involved in recycling of specific cargos from endosome to the plasma membrane. The sequence is that of Vacuolar protein sorting-associated protein 29 from Arabidopsis thaliana (Mouse-ear cress).